The chain runs to 706 residues: Mitochondrial intermediate peptidase, mitochondrial (706 aa).

Residues 1–29 (MWKLTRRLQPHINSTRWLVRNFRNGGAGD) constitute a mitochondrion transit peptide. Residues 212–238 (NPTYRSTSGGSRGSTRSAHKSKQKGFR) form a disordered region. A compositionally biased stretch (low complexity) spans 214-227 (TYRSTSGGSRGSTR). Histidine 491 is a Zn(2+) binding site. Glutamate 492 is a catalytic residue. Zn(2+) is bound by residues histidine 495 and glutamate 520.

This sequence belongs to the peptidase M3 family. Zn(2+) is required as a cofactor.

The protein localises to the mitochondrion. Aminopeptidase which cleaves preproteins, imported into the mitochondrion, to their mature size. Could cleave both preproteins and preprotein intermediates already cleaved by the mitochondrial processing peptidase (MPP). This is Mitochondrial intermediate peptidase, mitochondrial from Arabidopsis thaliana (Mouse-ear cress).